Reading from the N-terminus, the 432-residue chain is Sensor histidine kinase YrkQ (432 aa).

Residues 1-12 (MAHLKFTLTKKL) are Cytoplasmic-facing. The chain crosses the membrane as a helical span at residues 13–33 (ALLIMVAAIVSGVIFLTLQKI). The Extracellular segment spans residues 34-145 (TDDLIEGYLS…GFYSSRYYDL (112 aa)). The chain crosses the membrane as a helical span at residues 146–166 (AFALDLLGATLIFLIIVLFGI). Positions 167 to 219 (RQSLRYLKTIHQEIHILEGGELDYEMTIKGHDELAMIAKSIEDLRKAFLDKLK) constitute an HAMP domain. Residues 167-432 (RQSLRYLKTI…IVLRFWNTKM (266 aa)) are Cytoplasmic-facing. A Histidine kinase domain is found at 234-432 (EMSHDMRTPL…IVLRFWNTKM (199 aa)). His-237 bears the Phosphohistidine; by autocatalysis mark.

The protein localises to the cell membrane. It carries out the reaction ATP + protein L-histidine = ADP + protein N-phospho-L-histidine.. Functionally, member of the two-component regulatory system YrkQ/YrkP. Probably activates YrkP by phosphorylation. The chain is Sensor histidine kinase YrkQ (yrkQ) from Bacillus subtilis (strain 168).